Consider the following 132-residue polypeptide: Large ribosomal subunit protein uL22 (132 aa).

It belongs to the universal ribosomal protein uL22 family. Part of the 50S ribosomal subunit.

This protein binds specifically to 23S rRNA; its binding is stimulated by other ribosomal proteins, e.g. L4, L17, and L20. It is important during the early stages of 50S assembly. It makes multiple contacts with different domains of the 23S rRNA in the assembled 50S subunit and ribosome. In terms of biological role, the globular domain of the protein is located near the polypeptide exit tunnel on the outside of the subunit, while an extended beta-hairpin is found that lines the wall of the exit tunnel in the center of the 70S ribosome. The polypeptide is Large ribosomal subunit protein uL22 (Pelagibacter ubique (strain HTCC1062)).